A 231-amino-acid polypeptide reads, in one-letter code: Ribose-5-phosphate isomerase A (231 aa).

Residues Ser-23–Thr-26, Asp-80–Asp-83, and Lys-93–Gly-96 each bind substrate. The active-site Proton acceptor is Glu-102. A substrate-binding site is contributed by Lys-120.

The protein belongs to the ribose 5-phosphate isomerase family. Homodimer.

The enzyme catalyses aldehydo-D-ribose 5-phosphate = D-ribulose 5-phosphate. The protein operates within carbohydrate degradation; pentose phosphate pathway; D-ribose 5-phosphate from D-ribulose 5-phosphate (non-oxidative stage): step 1/1. Functionally, catalyzes the reversible conversion of ribose-5-phosphate to ribulose 5-phosphate. The protein is Ribose-5-phosphate isomerase A of Prochlorococcus marinus subsp. pastoris (strain CCMP1986 / NIES-2087 / MED4).